The chain runs to 430 residues: Histidine--tRNA ligase (430 aa).

The protein belongs to the class-II aminoacyl-tRNA synthetase family. As to quaternary structure, homodimer.

The protein localises to the cytoplasm. It carries out the reaction tRNA(His) + L-histidine + ATP = L-histidyl-tRNA(His) + AMP + diphosphate + H(+). The polypeptide is Histidine--tRNA ligase (Gloeothece citriformis (strain PCC 7424) (Cyanothece sp. (strain PCC 7424))).